The chain runs to 140 residues: Organic hydroperoxide resistance protein-like (140 aa).

It belongs to the OsmC/Ohr family.

The chain is Organic hydroperoxide resistance protein-like from Staphylococcus aureus (strain bovine RF122 / ET3-1).